A 466-amino-acid polypeptide reads, in one-letter code: MQQHFHFDAIVIGSGPGGEGAAMGLVKQGARVAVIERYNNVGGGCTHWGTIPSKALRHAVSRIIEFNQNPLYSDNARTISSSFSDILNHADRVINQQTRMRQGFYDRNHCQMFSGDASFIDANTINVRYADGTNDTLRADNIVIATGSRPYRPANVDFTHERIYDSDTILQLSHEPQHVIIYGAGVIGCEYASIFRGLSVKVDLINTRDRLLAFLDQEMSDALSYHFWNNGVVIRHNEEFEQIEGTVDGVIVHLKSGKKVKADCLLYANGRTGNTSGLGLEKIGLEADSRGLLKVNSMYQTALSHVYAVGDVIGYPSLASAAYDQGRIAAQAMIKGEANTHLIEDIPTGIYTIPEISSVGKTEQDLTAMKVPYEVGRAQFKHLARAQIVGMDTGSLKILFHRETKQILGIHCFGERAAEIIHIGQAIMEQKGEGNTIEYFVNTTFNYPTMAEAYRVAALNGLNRLF.

Residue 36 to 45 (ERYNNVGGGC) participates in FAD binding.

It belongs to the class-I pyridine nucleotide-disulfide oxidoreductase family. FAD serves as cofactor.

Its subcellular location is the cytoplasm. It carries out the reaction NAD(+) + NADPH = NADH + NADP(+). Functionally, conversion of NADPH, generated by peripheral catabolic pathways, to NADH, which can enter the respiratory chain for energy generation. This Yersinia enterocolitica serotype O:8 / biotype 1B (strain NCTC 13174 / 8081) protein is Soluble pyridine nucleotide transhydrogenase.